The sequence spans 56 residues: Large ribosomal subunit protein bL32 (56 aa).

Residues 1–37 (MAVQQNKKSRSKRGMRRSHDALSTAQLSVDATSGELH) are disordered. Residues 7-16 (KKSRSKRGMR) are compositionally biased toward basic residues. Residues 21-31 (ALSTAQLSVDA) show a composition bias toward polar residues.

Belongs to the bacterial ribosomal protein bL32 family.

The protein is Large ribosomal subunit protein bL32 of Shewanella pealeana (strain ATCC 700345 / ANG-SQ1).